A 299-amino-acid polypeptide reads, in one-letter code: Aspartate carbamoyltransferase catalytic subunit (299 aa).

Carbamoyl phosphate contacts are provided by R51 and T52. Residue K80 participates in L-aspartate binding. The carbamoyl phosphate site is built by R101, H129, and Q132. L-aspartate is bound by residues R162 and R221. Positions 260 and 261 each coordinate carbamoyl phosphate.

It belongs to the aspartate/ornithine carbamoyltransferase superfamily. ATCase family. As to quaternary structure, heterooligomer of catalytic and regulatory chains.

The catalysed reaction is carbamoyl phosphate + L-aspartate = N-carbamoyl-L-aspartate + phosphate + H(+). It functions in the pathway pyrimidine metabolism; UMP biosynthesis via de novo pathway; (S)-dihydroorotate from bicarbonate: step 2/3. Functionally, catalyzes the condensation of carbamoyl phosphate and aspartate to form carbamoyl aspartate and inorganic phosphate, the committed step in the de novo pyrimidine nucleotide biosynthesis pathway. The protein is Aspartate carbamoyltransferase catalytic subunit of Sulfolobus acidocaldarius (strain ATCC 33909 / DSM 639 / JCM 8929 / NBRC 15157 / NCIMB 11770).